The primary structure comprises 340 residues: S-adenosylmethionine:tRNA ribosyltransferase-isomerase (340 aa).

This sequence belongs to the QueA family. As to quaternary structure, monomer.

Its subcellular location is the cytoplasm. The catalysed reaction is 7-aminomethyl-7-carbaguanosine(34) in tRNA + S-adenosyl-L-methionine = epoxyqueuosine(34) in tRNA + adenine + L-methionine + 2 H(+). The protein operates within tRNA modification; tRNA-queuosine biosynthesis. Transfers and isomerizes the ribose moiety from AdoMet to the 7-aminomethyl group of 7-deazaguanine (preQ1-tRNA) to give epoxyqueuosine (oQ-tRNA). The sequence is that of S-adenosylmethionine:tRNA ribosyltransferase-isomerase from Francisella tularensis subsp. tularensis (strain FSC 198).